We begin with the raw amino-acid sequence, 460 residues long: MSPCKLLPFCVALALTGCSLAPDYQRPAMPVPQQFSLSQNGLVNAADNYQNAGWRTFFVDNQVKTLISEALVNNRDLRMAALKVQEARAQYRLTDADRYPQLNGEGSGSWSGNLKGDSATTREFSTGLNASFDLDFFGRLKNMSEAERQNYLATEEAQRAVHILLVSNVAQSYFNQQLAYAQLQIAEETLRNYQQSYAFVEKQLLTGSSNVLALEQARGVIESTRSDIAKRQGELAQANNALQLLLGSYGKLPQAQTVNSDSLQSVKLPAGLPSQILLQRPDIMEAEHALMAANANIGAARAAFFPSISLTSGISTASSDLSSLFNASSGMWNFIPKIEIPIFNAGRNQANLDIAEIRQQQSVVNYEQKIQNAFKEVADALALRQSLNDQISAQQRYLASLQITLQRARTLYQHGAVSYLEVLDAERSLFATRQTLLDLNYARQVNEISLYTALGGGWQQ.

An N-terminal signal peptide occupies residues 1–17 (MSPCKLLPFCVALALTG). C18 carries the N-palmitoyl cysteine lipid modification. C18 carries the S-diacylglycerol cysteine lipid modification.

This sequence belongs to the outer membrane factor (OMF) (TC 1.B.17) family. Homotrimer. Component of the cus efflux system composed of CusA, CusB, CusC and CusF.

Its subcellular location is the cell outer membrane. Forms pores that allow passive diffusion of cations across the outer membrane. Part of a cation efflux system that mediates resistance to copper and silver. The chain is Cation efflux system protein CusC (cusC) from Escherichia coli O6:H1 (strain CFT073 / ATCC 700928 / UPEC).